Here is a 253-residue protein sequence, read N- to C-terminus: Imidazole glycerol phosphate synthase subunit HisF (253 aa).

Residues D11 and D130 contribute to the active site.

Belongs to the HisA/HisF family. Heterodimer of HisH and HisF.

The protein localises to the cytoplasm. It carries out the reaction 5-[(5-phospho-1-deoxy-D-ribulos-1-ylimino)methylamino]-1-(5-phospho-beta-D-ribosyl)imidazole-4-carboxamide + L-glutamine = D-erythro-1-(imidazol-4-yl)glycerol 3-phosphate + 5-amino-1-(5-phospho-beta-D-ribosyl)imidazole-4-carboxamide + L-glutamate + H(+). It functions in the pathway amino-acid biosynthesis; L-histidine biosynthesis; L-histidine from 5-phospho-alpha-D-ribose 1-diphosphate: step 5/9. IGPS catalyzes the conversion of PRFAR and glutamine to IGP, AICAR and glutamate. The HisF subunit catalyzes the cyclization activity that produces IGP and AICAR from PRFAR using the ammonia provided by the HisH subunit. This Clostridium botulinum (strain Langeland / NCTC 10281 / Type F) protein is Imidazole glycerol phosphate synthase subunit HisF.